The following is a 306-amino-acid chain: Formamidopyrimidine-DNA glycosylase (306 aa).

Catalysis depends on Pro-2, which acts as the Schiff-base intermediate with DNA. Glu-3 functions as the Proton donor in the catalytic mechanism. Residue Lys-58 is the Proton donor; for beta-elimination activity of the active site. DNA contacts are provided by His-114, Arg-136, and Lys-179. The segment at Ser-270 to Lys-306 adopts an FPG-type zinc-finger fold. Arg-296 acts as the Proton donor; for delta-elimination activity in catalysis.

Belongs to the FPG family. As to quaternary structure, monomer. Zn(2+) is required as a cofactor.

It catalyses the reaction Hydrolysis of DNA containing ring-opened 7-methylguanine residues, releasing 2,6-diamino-4-hydroxy-5-(N-methyl)formamidopyrimidine.. The enzyme catalyses 2'-deoxyribonucleotide-(2'-deoxyribose 5'-phosphate)-2'-deoxyribonucleotide-DNA = a 3'-end 2'-deoxyribonucleotide-(2,3-dehydro-2,3-deoxyribose 5'-phosphate)-DNA + a 5'-end 5'-phospho-2'-deoxyribonucleoside-DNA + H(+). In terms of biological role, involved in base excision repair of DNA damaged by oxidation or by mutagenic agents. Acts as a DNA glycosylase that recognizes and removes damaged bases. Has a preference for oxidized purines, such as 7,8-dihydro-8-oxoguanine (8-oxoG). Has AP (apurinic/apyrimidinic) lyase activity and introduces nicks in the DNA strand. Cleaves the DNA backbone by beta-delta elimination to generate a single-strand break at the site of the removed base with both 3'- and 5'-phosphates. In Sinorhizobium medicae (strain WSM419) (Ensifer medicae), this protein is Formamidopyrimidine-DNA glycosylase.